The chain runs to 292 residues: Poly(U)-specific endoribonuclease-B (292 aa).

The EndoU domain maps to 8 to 285 (VNHELSKLFN…IGTAYPALLS (278 aa)). Residues His-162, His-178, and Lys-224 contribute to the active site.

The protein belongs to the ENDOU family. As to quaternary structure, monomer. Requires Mn(2+) as cofactor.

The protein localises to the nucleus. The catalysed reaction is uridylyl-uridylyl-ribonucleotide-RNA = a 3'-end uridylyl-2',3'-cyclophospho-uridine-RNA + a 5'-end dephospho-ribonucleoside-RNA. Its function is as follows. Poly(U)-specific endoribonuclease involved in the processing of intron-encoded box C/D snoRNAs, such as U16 and U86. Releases products that have 2',3'-cyclic phosphate termini at the 3'-end. This chain is Poly(U)-specific endoribonuclease-B (endou-b), found in Xenopus laevis (African clawed frog).